The primary structure comprises 303 residues: Coenzyme PQQ synthesis protein B (303 aa).

It belongs to the PqqB family.

Its pathway is cofactor biosynthesis; pyrroloquinoline quinone biosynthesis. Functionally, may be involved in the transport of PQQ or its precursor to the periplasm. The chain is Coenzyme PQQ synthesis protein B from Pseudomonas syringae pv. syringae (strain B728a).